The sequence spans 259 residues: Dihydroorotate dehydrogenase B (NAD(+)), electron transfer subunit (259 aa).

The FAD-binding FR-type domain maps to 2 to 102 (MQKQNMIVVN…LGPLGHGFPL (101 aa)). Residues 53–56 (RPIS), 70–72 (LYR), and 77–78 (GT) contribute to the FAD site. [2Fe-2S] cluster-binding residues include cysteine 221, cysteine 226, cysteine 229, and cysteine 246.

Belongs to the PyrK family. Heterotetramer of 2 PyrK and 2 PyrD type B subunits. Requires [2Fe-2S] cluster as cofactor. The cofactor is FAD.

The protein operates within pyrimidine metabolism; UMP biosynthesis via de novo pathway; orotate from (S)-dihydroorotate (NAD(+) route): step 1/1. Responsible for channeling the electrons from the oxidation of dihydroorotate from the FMN redox center in the PyrD type B subunit to the ultimate electron acceptor NAD(+). This chain is Dihydroorotate dehydrogenase B (NAD(+)), electron transfer subunit, found in Bacillus cereus (strain B4264).